The primary structure comprises 1863 residues: MIEDKGPRVADYFVVAGLTDVSKPLEEEIHFNDACHKVAKPKEPITDVSVIIKSLGEEVPQDYICIDVTPTGLSADLNNGSLVGPQIYLCYRRGRDKPPLTDLGVLYDWKERLKQGCEIIQSTPYGRPANISGSTSSQRIYITYRRASENMTQNTLAVTDICIIIPSKGESPPHTFCKVDKNLNNSMWGSAVYLCYKKSVAKTNTVSYKAGLICRYPQEDYESFSLPESVPLFCLPMGATIECWPSNSKYPLPVFSTFVLTGASAEKVYGAAIQFYEPYSEENLTEKQRLLLGLTSADGKSDSSKTIHTNKCICLLSHWPFFDAFRKFLTFLYRYSISGPHVLPIEKHISHFMHKVPFPSPQRPRILVQLSPHDNLILSQPVSSPLPLSGGKFSTLLQNLGPENAVTLLVFAVTEHKILIHSLRPSVLTSVTEALVSMIFPFHWPCPYVPLCPLALADVLSAPCPFIVGIDSRYFDLYDPPPDVSCVDVDTNTISQIGDKKNVAWKILPKKPCKNLMNTLNNLHQQLAKLQQRPRDDGLMDLAINDYDFNSGKRLHMIDLEIQEAFLFFMASILKGYRSYLRPITQAPSETATDAASLFALQAFLRSRDRSHQKFYNMMTKTQMFIRFIEECSFVSDKDASLAFFDDCVDKVDMDKSGEVRLIELDESFKSEHTVFVTPPEIPHLPNGEEPPLQYSYNGFPVLRNNLFERPEGFLQAKKNKLPSKSSSPNSPLPMFRRTKQEIKSAHKIAKRYSSIPQMWSRCLLRHCYGLWFICLPAYVKVCHSKVRALKTAYDVLKKMQSKKMDPPDEVCYRILMQLCGQYDQPVLAVRVLFEMQKAGIDPNAITYGYYNKAVLESTWPSRSRSGYFLWTKVRNVVLGVTQFKRALKKHAHLSQTTLSGGQSDLGYNSLSKDEVRRGDTSTEDIQEEKDKKGSDCSSLSESESTKGSADCLPKLSYQNSSSIVRLTGTSNNSAGKISGESMESTPELLLISSLEDTNETRNIQSRCFRKRHKSDNETNLQQQVVWGNRNRNLSGGVLMGFMLNRINQEATPGDIVEKLGADAKILSNVISKSTRPNTLDIGKPPLRSKRDSLEKESSDDDTPFDGSNYLADKVDSPVIFDLEDLDSETDVSKAGCVATQNPKRIQRMNSSFSVKPFEKTDVATGFDPLSLLVAETEQQQKEEEEEDEDDSKSISTPSARRDLAEEIVMYMNNMSSPLTSRTPSIDLQRACDDKLNKKSPPLVKACRRSSLPPNSPKPVRLTKSKSYTKSEEKPRDRLWSSPAFSPTCPFREESQDTLTHSSPSFNLDTLLVPKLDVLRNSMFTAGKGVAEKASKWYSRFTMYTTSSKDQSSDRTSLSSVGAQDSESTSLTDEDVCHELEGPISSQETSATSGTKRIDLSRISLESSASLEGSLSKFALPGKSEVTSSFNASNTNIFQNYAMEVLISSCSRCRTCDCLVHDEEIMAGWTADDSNLNTTCPFCGNIFLPFLNIEIRDLRRPGRYFLKSSPSTENMHFPSSISSQTRQSCISTSASGLDTSALSVQGNFDLNSKSKLQENFCTRSIQIPANRSKTAMSKCPIFPMARSISTSGPLDKEDTGRQKLISTGSLPATLQGATDSLGLEWHLPSPDPVTVPYLSPLVVWKELESLLENEGDHAITVADFVDHHPIVFWNLVWYFRRLDLPSNLPGLILSSEHCNKYSKIPRHCMSEDSKYVLIQMLWDNMKLHQDPGQPLYILWNAHTQKYPMVHLLQKSDNSFNQELLKSMVKSIKMNDVYGPMSQILETLNKCPHFKRQRSLYREILFLSLVALGRENIDIDAFDKEYKMAYDRLTPSQVKSTHNCDRPPSTGVMECRKTFGEPYL.

Residues 42 to 200 (KEPITDVSVI…AVYLCYKKSV (159 aa)) enclose the MABP domain. Residues 192–364 (VYLCYKKSVA…KVPFPSPQRP (173 aa)) form the uDENN domain. The cDENN domain maps to 385-521 (PLPLSGGKFS…PCKNLMNTLN (137 aa)). Residues 523–641 (LHQQLAKLQQ…CSFVSDKDAS (119 aa)) form the dDENN domain. S731 carries the post-translational modification Phosphoserine. PPR repeat units follow at residues 772-808 (WFICLPAYVKVCHSKVRALKTAYDVLKKMQSKKMDPP) and 809-843 (DEVCYRILMQLCGQYDQPVLAVRVLFEMQKAGIDP). Residues 905 to 952 (DLGYNSLSKDEVRRGDTSTEDIQEEKDKKGSDCSSLSESESTKGSADC) are disordered. Positions 912 to 921 (SKDEVRRGDT) are enriched in basic and acidic residues. Residues 917-933 (RRGDTSTEDIQEEKDKK) carry the Bipartite nuclear localization signal motif. The segment covering 936–949 (DCSSLSESESTKGS) has biased composition (low complexity). Residues S1015, S1035, S1099, S1151, and S1152 each carry the phosphoserine modification. The segment at 1075-1111 (TRPNTLDIGKPPLRSKRDSLEKESSDDDTPFDGSNYL) is disordered. Residues 1177-1202 (TEQQQKEEEEEDEDDSKSISTPSARR) are disordered. S1225, S1240, and S1251 each carry phosphoserine. 2 disordered regions span residues 1237-1306 (NKKS…SPSF) and 1348-1375 (SKDQSSDRTSLSSVGAQDSESTSLTDED). A compositionally biased stretch (basic and acidic residues) spans 1269 to 1279 (TKSEEKPRDRL). S1281 is subject to Phosphoserine. Polar residues-rich tracts occupy residues 1297–1306 (DTLTHSSPSF) and 1348–1371 (SKDQSSDRTSLSSVGAQDSESTSL). Phosphoserine is present on residues S1508, S1587, S1589, and S1591.

As to expression, expressed ubiquitously. Highest expression in bone marrow, medium in peripheral blood lymphocytes and lowest in spleen. In brain, breast, and prostate, higher expression was seen in normal cells than in tumor cells. Expression is regulated in a growth- and cell cycle-dependent manner.

It localises to the nucleus. Its function is as follows. Probable guanine nucleotide exchange factor (GEF) which may activate RAB10. Promotes the exchange of GDP to GTP, converting inactive GDP-bound Rab proteins into their active GTP-bound form. According to PubMed:8056341, it may bind to ISRE-like element (interferon-stimulated response element) of MYC P2 promoter. In Homo sapiens (Human), this protein is C-myc promoter-binding protein (DENND4A).